Here is a 653-residue protein sequence, read N- to C-terminus: MKKATTSAAAKSQGNSKMQKNANNGTAKDKKKPNLDKESNDSNSVSDMLAVTKDQEVHAFFSKLFDDDAGPSTSKKTQSGSAAAAKTADRKRRLQAEADANNNDTGKAGKLTKESEATQGARATKRKQARSLGLERTSPIQVNGAALACPLVRKSLPPGEANSCPQPPKKDPAAVNSLVKIIKAEPTEEGNNNNDEKETETIETHKADSVEEGRRVLQWILFPVQTKVFFKDFWEHTACLVQRSNPKYFQSMISFKMLDEILIRHHLDFTVNVDVTTYKNGKRETLNPEGRALPPAVWGFYSDGCSIRLLNPSTYLIRLRQVCTVLQEFFHCKVGANLYLTPPNSQGFAPHYDDIEAFVIQVEGRKRWLLYEPPKKADQLARISSGNYDQEQLGKPIIDEVLSAGDVLYFPRGAVHQAITEEQQHSLHITLSVYQQQAYANLLETLMPMVLKKAVDRSVALRRGLPLHTFQVLGNAYKGNDCGSRKQLVENVQKLVTNYLMPSEDDIDEAVDQMAKKFQHEALPPIVLPSEEVRTVHGARSDADEQGNCVCDYKFNKKTSVRLLRANILRLVTESDGSVRIYHHVDNGLDYCKYEPYFMEILPEEAKAVELLISAYPFYLTIDQLPLESSARKIEVATALWEHGLLMTEKPFK.

Positions 1–12 (MKKATTSAAAKS) are enriched in low complexity. Disordered stretches follow at residues 1-50 (MKKA…DMLA) and 65-137 (FDDD…LERT). The span at 13–26 (QGNSKMQKNANNGT) shows a compositional bias: polar residues. Ser-44 carries the phosphoserine modification. Over residues 72–86 (STSKKTQSGSAAAAK) the composition is skewed to low complexity. Ser-131 is modified (phosphoserine). A Phosphothreonine modification is found at Thr-137. Ser-138 bears the Phosphoserine mark. The segment at 184–208 (AEPTEEGNNNNDEKETETIETHKAD) is disordered. Positions 194 to 208 (NDEKETETIETHKAD) are enriched in basic and acidic residues. Residues 300 to 450 (FYSDGCSIRL…NLLETLMPMV (151 aa)) enclose the JmjC domain. Residues His-351, Asp-353, and His-416 each coordinate Fe cation.

It belongs to the ROX family. NO66 subfamily. Requires Fe(2+) as cofactor.

It is found in the nucleus. It catalyses the reaction N(6),N(6)-dimethyl-L-lysyl(36)-[histone H3] + 2 2-oxoglutarate + 2 O2 = L-lysyl(36)-[histone H3] + 2 formaldehyde + 2 succinate + 2 CO2. Its function is as follows. Oxygenase that can act as both a histone lysine demethylase and a ribosomal histidine hydroxylase. Specifically demethylates 'Lys-4' (H3K4me) and 'Lys-36' (H3K36me) of histone H3, thereby playing a central role in histone code. The chain is Bifunctional lysine-specific demethylase and histidyl-hydroxylase NO66 from Drosophila melanogaster (Fruit fly).